The sequence spans 245 residues: Biosynthetic peptidoglycan transglycosylase (245 aa).

The helical transmembrane segment at 20–42 threads the bilayer; sequence VYAGSVFAGAWLATQLFYLAQIA.

This sequence belongs to the glycosyltransferase 51 family.

Its subcellular location is the cell inner membrane. The enzyme catalyses [GlcNAc-(1-&gt;4)-Mur2Ac(oyl-L-Ala-gamma-D-Glu-L-Lys-D-Ala-D-Ala)](n)-di-trans,octa-cis-undecaprenyl diphosphate + beta-D-GlcNAc-(1-&gt;4)-Mur2Ac(oyl-L-Ala-gamma-D-Glu-L-Lys-D-Ala-D-Ala)-di-trans,octa-cis-undecaprenyl diphosphate = [GlcNAc-(1-&gt;4)-Mur2Ac(oyl-L-Ala-gamma-D-Glu-L-Lys-D-Ala-D-Ala)](n+1)-di-trans,octa-cis-undecaprenyl diphosphate + di-trans,octa-cis-undecaprenyl diphosphate + H(+). It participates in cell wall biogenesis; peptidoglycan biosynthesis. Functionally, peptidoglycan polymerase that catalyzes glycan chain elongation from lipid-linked precursors. This is Biosynthetic peptidoglycan transglycosylase from Burkholderia lata (strain ATCC 17760 / DSM 23089 / LMG 22485 / NCIMB 9086 / R18194 / 383).